A 441-amino-acid chain; its full sequence is Tol-Pal system protein TolB (441 aa).

The N-terminal stretch at 1–25 is a signal peptide; it reads MRIFFFAYVLPTVISLLLGCQGAIA.

It belongs to the TolB family. As to quaternary structure, the Tol-Pal system is composed of five core proteins: the inner membrane proteins TolA, TolQ and TolR, the periplasmic protein TolB and the outer membrane protein Pal. They form a network linking the inner and outer membranes and the peptidoglycan layer.

The protein localises to the periplasm. Part of the Tol-Pal system, which plays a role in outer membrane invagination during cell division and is important for maintaining outer membrane integrity. The chain is Tol-Pal system protein TolB from Anaplasma marginale (strain St. Maries).